A 276-amino-acid polypeptide reads, in one-letter code: F-box/LRR-repeat protein 20 (276 aa).

The F-box domain occupies 22-68 (AVINKKLPKELLLRIFSFLDVVTLCRCAQVSRAWNVLALDGSNWQRI). LRR repeat units follow at residues 74–100 (QRDIEGRVVENISKRCGGFLRKLSLRG), 101–126 (CLGVGDNALRTFAQNCRNIEVLSLNG), 127–152 (CTKTTDATCTSLSKFCSKLRHLDLAS), 153–178 (CTSITNMSLKALSEGCPLLEQLNISW), 179–204 (CDQVTKDGIQALVRGCGGLKALFLKG), 205–230 (CTQLEDEALKYIGAHCPELVTLNLQT), 231–256 (CLQITDEGLITICRGCHKLQSLCASG), and 257–276 (CSNITDAILNALGQNCPRLR).

Interacts with SKP1 and CUL1. In terms of tissue distribution, widely expressed, with highest expression in skeletal muscle, heart and brain.

It is found in the cytoplasm. Substrate-recognition component of the SCF (SKP1-CUL1-F-box protein)-type E3 ubiquitin ligase complex. Role in neural transmission. The protein is F-box/LRR-repeat protein 20 (Fbxl20) of Rattus norvegicus (Rat).